Here is a 428-residue protein sequence, read N- to C-terminus: UDP-N-acetylglucosamine 1-carboxyvinyltransferase 2 (428 aa).

22–23 (KN) contributes to the phosphoenolpyruvate binding site. Arg92 provides a ligand contact to UDP-N-acetyl-alpha-D-glucosamine. Residue Cys116 is the Proton donor of the active site. Cys116 is modified (2-(S-cysteinyl)pyruvic acid O-phosphothioketal). UDP-N-acetyl-alpha-D-glucosamine-binding positions include 121 to 125 (RPIDQ), Asp304, and Ile326.

The protein belongs to the EPSP synthase family. MurA subfamily.

The protein localises to the cytoplasm. The catalysed reaction is phosphoenolpyruvate + UDP-N-acetyl-alpha-D-glucosamine = UDP-N-acetyl-3-O-(1-carboxyvinyl)-alpha-D-glucosamine + phosphate. The protein operates within cell wall biogenesis; peptidoglycan biosynthesis. Its function is as follows. Cell wall formation. Adds enolpyruvyl to UDP-N-acetylglucosamine. The sequence is that of UDP-N-acetylglucosamine 1-carboxyvinyltransferase 2 from Geobacillus kaustophilus (strain HTA426).